The primary structure comprises 883 residues: Phosphoenolpyruvate carboxylase (883 aa).

Active-site residues include H138 and K546.

It belongs to the PEPCase type 1 family. Mg(2+) serves as cofactor.

It carries out the reaction oxaloacetate + phosphate = phosphoenolpyruvate + hydrogencarbonate. Its function is as follows. Forms oxaloacetate, a four-carbon dicarboxylic acid source for the tricarboxylic acid cycle. This Escherichia fergusonii (strain ATCC 35469 / DSM 13698 / CCUG 18766 / IAM 14443 / JCM 21226 / LMG 7866 / NBRC 102419 / NCTC 12128 / CDC 0568-73) protein is Phosphoenolpyruvate carboxylase.